Consider the following 275-residue polypeptide: 3-methyl-2-oxobutanoate hydroxymethyltransferase (275 aa).

Residues aspartate 49 and aspartate 88 each contribute to the Mg(2+) site. 3-methyl-2-oxobutanoate is bound by residues 49–50 (DS), aspartate 88, and lysine 118. A Mg(2+)-binding site is contributed by glutamate 120. Glutamate 187 (proton acceptor) is an active-site residue.

Belongs to the PanB family. Homodecamer; pentamer of dimers. Requires Mg(2+) as cofactor.

It localises to the cytoplasm. The catalysed reaction is 3-methyl-2-oxobutanoate + (6R)-5,10-methylene-5,6,7,8-tetrahydrofolate + H2O = 2-dehydropantoate + (6S)-5,6,7,8-tetrahydrofolate. It functions in the pathway cofactor biosynthesis; (R)-pantothenate biosynthesis; (R)-pantoate from 3-methyl-2-oxobutanoate: step 1/2. In terms of biological role, catalyzes the reversible reaction in which hydroxymethyl group from 5,10-methylenetetrahydrofolate is transferred onto alpha-ketoisovalerate to form ketopantoate. The sequence is that of 3-methyl-2-oxobutanoate hydroxymethyltransferase from Rhodospirillum centenum (strain ATCC 51521 / SW).